Reading from the N-terminus, the 1020-residue chain is Tetrathionate reductase subunit A (1020 aa).

The tat-type signal signal peptide spans 1-33 (MANLTRRQWLKVGLAVGGMVTFGLSYRDVAKRA). The region spanning 71–154 (QTIAMTQCFG…TLLESLYSPL (84 aa)) is the 4Fe-4S Mo/W bis-MGD-type domain. 4 residues coordinate [4Fe-4S] cluster: cysteine 78, cysteine 81, cysteine 85, and cysteine 140.

The protein belongs to the prokaryotic molybdopterin-containing oxidoreductase family. In terms of assembly, probably composed of three subunits: TtrA, TtrB and TtrC. Requires [4Fe-4S] cluster as cofactor. The cofactor is Mo-bis(molybdopterin guanine dinucleotide). In terms of processing, predicted to be exported by the Tat system. The position of the signal peptide cleavage has not been experimentally proven.

It is found in the periplasm. It localises to the cell inner membrane. In terms of biological role, part of a membrane-bound tetrathionate reductase that catalyzes the reduction of tetrathionate to thiosulfate. TtrA is the catalytic subunit. During mice infection, the ability to use tetrathionate as an electron acceptor is a growth advantage for S.typhimurium over the competing microbiota in the lumen of the inflamed gut. The protein is Tetrathionate reductase subunit A (ttrA) of Salmonella typhimurium (strain LT2 / SGSC1412 / ATCC 700720).